The chain runs to 592 residues: Proteasome-associated ATPase (592 aa).

Residues 1–11 show a composition bias toward acidic residues; sequence MTGYDSSEEAE. Positions 1 to 24 are disordered; that stretch reads MTGYDSSEEAERDSSPADGYRQTP. The stretch at 25 to 99 forms a coiled coil; it reads AQLSAQIRVL…LKEEVDRLAQ (75 aa). 281 to 286 contributes to the ATP binding site; it reads GCGKTL. The interval 591–592 is docks into pockets in the proteasome alpha-ring; that stretch reads YL.

Belongs to the AAA ATPase family. Homohexamer. Assembles into a hexameric ring structure that caps the 20S proteasome core. Strongly interacts with the prokaryotic ubiquitin-like protein Pup through a hydrophobic interface; the interacting region of ARC lies in its N-terminal coiled-coil domain. There is one Pup binding site per ARC hexamer ring. Upon ATP-binding, the C-terminus of ARC interacts with the alpha-rings of the proteasome core, possibly by binding to the intersubunit pockets.

It participates in protein degradation; proteasomal Pup-dependent pathway. In terms of biological role, ATPase which is responsible for recognizing, binding, unfolding and translocation of pupylated proteins into the bacterial 20S proteasome core particle. May be essential for opening the gate of the 20S proteasome via an interaction with its C-terminus, thereby allowing substrate entry and access to the site of proteolysis. Thus, the C-termini of the proteasomal ATPase may function like a 'key in a lock' to induce gate opening and therefore regulate proteolysis. This is Proteasome-associated ATPase from Nakamurella multipartita (strain ATCC 700099 / DSM 44233 / CIP 104796 / JCM 9543 / NBRC 105858 / Y-104) (Microsphaera multipartita).